The primary structure comprises 477 residues: MCTGVRVRGITATAVSKILLDKGYRIVQASNIIRERFNLPLDTSPADVTVKDADKDELLVLGFYGHADKVYNDLVDELEYSFKWVSPVGLHSIHLGLIRDRVGDKCIVEIGNNVKGVLPRCNMDIGKKVLVGVAKAPIKPGEEALLTRSIRVVGKYVSIIYGKPSLTISEHIRDHDKREYLLAIAMSKIMGSGLGVHLRSSSQYAGKDEIEREIDELKQKLRELLDKAKHIEDAPTILYEGEFIGLIGLTSLAKEKLDSYRDKVVPTITRHHSLKSCDNVMSDIVDYSEILLRHGISRKIIYDALSDYILEKNRSLPKIRIIHIKPDGTTHTLSPGTIYEIVKSEKGVKIVLKRTLRNIGVYDGLGVEKKPGDIDYMVIEENSWIISHNYYRGNEWLGSYININTPPEILPGIIKYHDLLIDVIVKNTGEARIIDEEELKTYYEKEIIPEKLYEKALEVAKSILENHRLLIYRPNQQ.

It belongs to the FAU-1 family.

In terms of biological role, probable RNase involved in rRNA stability through maturation and/or degradation of precursor rRNAs. Binds to RNA in loop regions with AU-rich sequences. The polypeptide is Probable ribonuclease FAU-1 (Staphylothermus marinus (strain ATCC 43588 / DSM 3639 / JCM 9404 / F1)).